Reading from the N-terminus, the 633-residue chain is MFYTEAFDVIVVGGGHAGTEAALAAARMGANTLLLTHNIETIGQMSCNPAIGGIGKGHLVKEIDALGGAMALAIDKGGIQFRTLNSSKGPAVRATRAQADRTLYKNAIRDIVENQENLTLFQQSVDDLIVENDRVCGVVTQMGLKFKAKSVVLTVGTFLGGTIHIGLENYRGGRAGDPPSIALADRLRALPFRVDRLKTGTPARLDARSLDFSVMQPQPGDSPTPVFSFMGDRAMHPTQIPCYITHTNEKTHDIIRGGLDRSPMFTGVIEGIGPRYCPSIEDKITRFADKTSHQIFVEPEGLNSIEVYPNGISTSLPFDVQMNLVRSIKGFENAHIVRPGYAIEYDFFDPRDLKQTLETKFIQGLFFAGQINGTTGYEEAGAQGLVAGANAALQVQQKDPFILRRDQAYMGVLIDDLATMGTKEPYRMFTSRAEYRLLLREDNADSRLTAMGREIGLVDDARWAKYNDKMEAVETELQRLRGQWIHPDHAATPQLNTMLKNPVSREHSLEELIRRPEMTYSQLMKIESVGPGIDDPIAAEQVEIQIKYAGYIARQMDEIAKTQRHENTLLPIDMDFSKISGLSNEVVAKLTEARPETIGKASRISGITPAAISLLLVYLKKHGMLRKQDKISA.

Residues 13-18 (GGGHAG), Val-125, and Ser-180 each bind FAD. 273 to 287 (GPRYCPSIEDKITRF) contributes to the NAD(+) binding site. FAD is bound at residue Gln-370.

Belongs to the MnmG family. Homodimer. Heterotetramer of two MnmE and two MnmG subunits. Requires FAD as cofactor.

The protein localises to the cytoplasm. Its function is as follows. NAD-binding protein involved in the addition of a carboxymethylaminomethyl (cmnm) group at the wobble position (U34) of certain tRNAs, forming tRNA-cmnm(5)s(2)U34. In Alteromonas mediterranea (strain DSM 17117 / CIP 110805 / LMG 28347 / Deep ecotype), this protein is tRNA uridine 5-carboxymethylaminomethyl modification enzyme MnmG.